We begin with the raw amino-acid sequence, 471 residues long: MSNSTLKVKTKSMPDSRLAVELEISAKQCKESYQQALSKLSKTANLPGFRKGKVPQAVLLQQVGAKRIQASAIEKLLEVVWPQALQQESIEPLCEPELIGGFEALLENFNPDSKLTLTLETDISPIPQLKSSKGLTVEAEKVVFDPKKIDELIEQSRKQLSTLIPVENRPAKKGDVAVVSFEGKFTDNNSPIEGGNSDSMDIELEKGQMIPGFVEGIIGMNINDEKTVECTFPKDYPQEDARNRKAKFDIKVKDLKTRELPKLDDDFAKQASDKDSLEELRKELEAKLKEDAHQRSIKNRQEALLKALVEQLEIDLPKTLIEIETRNLIEQTARNFAQQGIDVKSTFTPELINKLMDSSRPEAIENLRRQFAMQALRKEEGIEVPNKEVDKKFEEVKKELSKEKNIDFEKLKEAVLEDLLQDKVFTWLEENNTVIETLPKTKSLNGKPSTQGKTSQSKSKKTKTKVEKTTK.

Residues 174–261 (GDVAVVSFEG…VKDLKTRELP (88 aa)) enclose the PPIase FKBP-type domain. A compositionally biased stretch (polar residues) spans 436 to 446 (ETLPKTKSLNG). A disordered region spans residues 436–471 (ETLPKTKSLNGKPSTQGKTSQSKSKKTKTKVEKTTK). The span at 447–457 (KPSTQGKTSQS) shows a compositional bias: low complexity.

Belongs to the FKBP-type PPIase family. Tig subfamily.

The protein localises to the cytoplasm. It carries out the reaction [protein]-peptidylproline (omega=180) = [protein]-peptidylproline (omega=0). Its function is as follows. Involved in protein export. Acts as a chaperone by maintaining the newly synthesized protein in an open conformation. Functions as a peptidyl-prolyl cis-trans isomerase. This is Trigger factor from Prochlorococcus marinus (strain MIT 9211).